The chain runs to 223 residues: GrpE protein homolog, mitochondrial (223 aa).

The protein belongs to the GrpE family. In terms of assembly, component of the PAM complex, at least composed of mtHsp70, mge1, tim44, pam16, pam17 and pam18.

The protein localises to the mitochondrion matrix. Its function is as follows. Essential component of the PAM complex, a complex required for the translocation of transit peptide-containing proteins from the inner membrane into the mitochondrial matrix in an ATP-dependent manner. Seems to control the nucleotide-dependent binding of ssc1 to substrate proteins. In Schizosaccharomyces pombe (strain 972 / ATCC 24843) (Fission yeast), this protein is GrpE protein homolog, mitochondrial (mge1).